The sequence spans 206 residues: Cytochrome c biogenesis ATP-binding export protein CcmA (206 aa).

The 205-residue stretch at 2–206 (LEARDVVCIR…IQLTPSEGTP (205 aa)) folds into the ABC transporter domain. 34 to 41 (GANGVGKT) contacts ATP.

This sequence belongs to the ABC transporter superfamily. CcmA exporter (TC 3.A.1.107) family. In terms of assembly, the complex is composed of two ATP-binding proteins (CcmA) and two transmembrane proteins (CcmB).

It is found in the cell inner membrane. It catalyses the reaction heme b(in) + ATP + H2O = heme b(out) + ADP + phosphate + H(+). Part of the ABC transporter complex CcmAB involved in the biogenesis of c-type cytochromes; once thought to export heme, this seems not to be the case, but its exact role is uncertain. Responsible for energy coupling to the transport system. This chain is Cytochrome c biogenesis ATP-binding export protein CcmA, found in Pectobacterium atrosepticum (strain SCRI 1043 / ATCC BAA-672) (Erwinia carotovora subsp. atroseptica).